The sequence spans 450 residues: Methylenetetrahydrofolate--tRNA-(uracil-5-)-methyltransferase TrmFO (450 aa).

FAD is bound at residue 10-15 (GGGLAG).

The protein belongs to the MnmG family. TrmFO subfamily. FAD serves as cofactor.

It localises to the cytoplasm. The enzyme catalyses uridine(54) in tRNA + (6R)-5,10-methylene-5,6,7,8-tetrahydrofolate + NADH + H(+) = 5-methyluridine(54) in tRNA + (6S)-5,6,7,8-tetrahydrofolate + NAD(+). It catalyses the reaction uridine(54) in tRNA + (6R)-5,10-methylene-5,6,7,8-tetrahydrofolate + NADPH + H(+) = 5-methyluridine(54) in tRNA + (6S)-5,6,7,8-tetrahydrofolate + NADP(+). In terms of biological role, catalyzes the folate-dependent formation of 5-methyl-uridine at position 54 (M-5-U54) in all tRNAs. This is Methylenetetrahydrofolate--tRNA-(uracil-5-)-methyltransferase TrmFO from Anaeromyxobacter dehalogenans (strain 2CP-C).